The chain runs to 626 residues: L-amino-acid oxidase 4 (626 aa).

The first 18 residues, 1-18 (KSFFRSLVAASLVIVSYS), serve as a signal peptide directing secretion. N-linked (GlcNAc...) asparagine glycosylation occurs at N54. The FAD site is built by G75, E94, A95, R102, M122, and R123. Residue R123 participates in L-glutamate binding. R123 is a binding site for L-glutamine. R123 contacts L-lysine. Residue R123 coordinates L-phenylalanine. 3 N-linked (GlcNAc...) asparagine glycosylation sites follow: N164, N193, and N331. Position 334 (V334) interacts with FAD. Y457 is a binding site for L-glutamate. L-glutamine is bound at residue Y457. Y457 is an L-lysine binding site. Y457 provides a ligand contact to L-phenylalanine. E551 lines the FAD pocket. Residue A558 participates in L-phenylalanine binding. W559 and V560 together coordinate FAD.

Belongs to the flavin monoamine oxidase family. FIG1 subfamily. In terms of assembly, homodimer. The cofactor is FAD. Out of the 4 glycosylated residues, Asn-54 is hypermannosylated. The presence of a hypermannosylated N-glycan on Asn-54 leads to adoption of a more active conformation in the absence of acid activation.

The protein localises to the secreted. The enzyme catalyses an L-alpha-amino acid + O2 + H2O = a 2-oxocarboxylate + H2O2 + NH4(+). It catalyses the reaction L-lysine + O2 + H2O = 6-amino-2-oxohexanoate + H2O2 + NH4(+). It carries out the reaction L-glutamate + O2 + H2O = H2O2 + 2-oxoglutarate + NH4(+). The catalysed reaction is L-arginine + O2 + H2O = 5-guanidino-2-oxopentanoate + H2O2 + NH4(+). The enzyme catalyses L-leucine + O2 + H2O = 4-methyl-2-oxopentanoate + H2O2 + NH4(+). It catalyses the reaction L-asparagine + O2 + H2O = 2-oxosuccinamate + H2O2 + NH4(+). It carries out the reaction L-histidine + O2 + H2O = 3-(imidazol-5-yl)pyruvate + H2O2 + NH4(+). The catalysed reaction is L-isoleucine + O2 + H2O = (S)-3-methyl-2-oxopentanoate + H2O2 + NH4(+). The enzyme catalyses L-methionine + O2 + H2O = 4-methylsulfanyl-2-oxobutanoate + H2O2 + NH4(+). It catalyses the reaction L-phenylalanine + O2 + H2O = 3-phenylpyruvate + H2O2 + NH4(+). It carries out the reaction L-tyrosine + O2 + H2O = 3-(4-hydroxyphenyl)pyruvate + H2O2 + NH4(+). The catalysed reaction is L-glutamine + O2 + H2O = 2-oxoglutaramate + H2O2 + NH4(+). The enzyme catalyses L-alanine + O2 + H2O = pyruvate + H2O2 + NH4(+). Its activity is regulated as follows. LAAO4 is activated by exposure to acidic pH, the detergent sodium dodecyl sulfate, or freezing. Functionally, catalyzes the oxidative deamination of L-amino acids with molecular oxygen to the corresponding alpha-keto acids and ammonia. L-glutamine shows the highest relative activity but LAAO4 has a broad substrate specificity, including L-amino acids with big aromatic, acidic and basic side chains. Methyl esters of these L-amino acids are also accepted, ethyl esters are converted but with lower activity, whereas D-Amino acids are not converted. No reaction is detected for small polar amino acids such as L-cysteine or L-aspartate, and very little for small, branched hydrophobic amino acids like L-valine. This Hebeloma cylindrosporum protein is L-amino-acid oxidase 4.